A 1291-amino-acid chain; its full sequence is Tat-binding homolog 7 (1291 aa).

The disordered stretch occupies residues 1–345 (MPRSDGFSPR…HNRGERERGR (345 aa)). Positions 64–82 (RYYEEEYHEAISSEEDERR) are enriched in basic and acidic residues. The span at 88-99 (SSNSMTYRQQVM) shows a compositional bias: polar residues. A compositionally biased stretch (acidic residues) spans 226–257 (EEEEEGAEEDEQSGEKDPEEEEDDSSNAESSE). Residues 298-311 (NRHHRNRNGSRRRR) are compositionally biased toward basic residues. 432–439 (GPPGTGKT) is an ATP binding site. Residues 914–1022 (ALQRQMRLFF…DAIDDLIECE (109 aa)) form the Bromo domain. Residues 1110–1194 (KSEEGTSTST…MKDASKDSTP (85 aa)) are disordered. Residues 1128–1142 (NKKKLLKKKKGQKKS) are compositionally biased toward basic residues. Residues 1148-1164 (EEHDEDSTVEDAGEDTI) are compositionally biased toward acidic residues. Positions 1168 to 1190 (LEIKKNQETPNSEHDIEMKDASK) are enriched in basic and acidic residues.

Belongs to the AAA ATPase family.

Functionally, thought to form a complex that enhances transcription from repetitive DNA sequences by modulating chromatin structure. This is Tat-binding homolog 7 (lex-1) from Caenorhabditis elegans.